An 88-amino-acid chain; its full sequence is Exodeoxyribonuclease 7 small subunit (88 aa).

Belongs to the XseB family. Heterooligomer composed of large and small subunits.

It localises to the cytoplasm. The catalysed reaction is Exonucleolytic cleavage in either 5'- to 3'- or 3'- to 5'-direction to yield nucleoside 5'-phosphates.. Functionally, bidirectionally degrades single-stranded DNA into large acid-insoluble oligonucleotides, which are then degraded further into small acid-soluble oligonucleotides. The protein is Exodeoxyribonuclease 7 small subunit of Tolumonas auensis (strain DSM 9187 / NBRC 110442 / TA 4).